A 420-amino-acid chain; its full sequence is uncharacterized protein (420 aa).

The YcaO domain occupies 79 to 420 (GKGIDNEAAM…AVNTIRGAES (342 aa)).

This is an uncharacterized protein from Rhizobium leguminosarum bv. trifolii.